The primary structure comprises 67 residues: DNA gyrase inhibitor YacG (67 aa).

Zn(2+)-binding residues include C9, C12, C28, and C32. The interval 46–67 (RIPSSGDLNDSDDWSEQPLDRQ) is disordered.

Belongs to the DNA gyrase inhibitor YacG family. In terms of assembly, interacts with GyrB. The cofactor is Zn(2+).

Inhibits all the catalytic activities of DNA gyrase by preventing its interaction with DNA. Acts by binding directly to the C-terminal domain of GyrB, which probably disrupts DNA binding by the gyrase. This Erwinia tasmaniensis (strain DSM 17950 / CFBP 7177 / CIP 109463 / NCPPB 4357 / Et1/99) protein is DNA gyrase inhibitor YacG.